The chain runs to 363 residues: Probable endopolygalacturonase A (363 aa).

The signal sequence occupies residues 1–20 (MQLLQSSVIAATVGAALVAA). Residues 21 to 28 (APVELEAR) constitute a propeptide that is removed on maturation. Cysteine 31 and cysteine 46 are joined by a disulfide. 6 PbH1 repeats span residues 158–187 (SDNL…DIGS), 188–209 (STYI…AINS), 210–230 (GSHI…SIGS), 239–260 (VEDV…RIKT), 268–290 (VSNV…VVEQ), and 302–347 (TNGI…SITG). N-linked (GlcNAc...) asparagine glycosylation is present at asparagine 162. Aspartate 202 functions as the Proton donor in the catalytic mechanism. Cysteine 204 and cysteine 220 are oxidised to a cystine. Histidine 224 is a catalytic residue. Intrachain disulfides connect cysteine 330–cysteine 335 and cysteine 354–cysteine 363.

Belongs to the glycosyl hydrolase 28 family.

It localises to the secreted. The catalysed reaction is (1,4-alpha-D-galacturonosyl)n+m + H2O = (1,4-alpha-D-galacturonosyl)n + (1,4-alpha-D-galacturonosyl)m.. In terms of biological role, involved in maceration and soft-rotting of plant tissue. Hydrolyzes the 1,4-alpha glycosidic bonds of de-esterified pectate in the smooth region of the plant cell wall. This Aspergillus parasiticus protein is Probable endopolygalacturonase A (pgaA).